The primary structure comprises 521 residues: Small ribosomal subunit protein mL104 (rPPR9) (521 aa).

Residues 1–59 (MPPSLPSLQLRRLLLRSFISSSSVNTLQSQPRIISSKPLFSPLPPSRSSIFSTFPSRFF) constitute a mitochondrion transit peptide. PPR repeat units follow at residues 174–204 (GGKT…MEND), 210–240 (DKES…TANE), 244–278 (DENI…GFEI), 279–313 (GTKA…LLEM), 321–355 (NTET…GCQP), 356–390 (DAET…GYGE), 393–427 (NKKE…GCKP), and 428–462 (GIKT…GIAV). Over residues 480–495 (EVDSNVKKRETLPEKT) the composition is skewed to basic and acidic residues. The interval 480–499 (EVDSNVKKRETLPEKTARKK) is disordered. A Nuclear localization signal motif is present at residues 486-503 (KKRETLPEKTARKKKRLK).

Belongs to the PPR family. P subfamily. In terms of assembly, interacts with NAP1;1 and TCP8. Able to bind mitochondrial RNA in vitro. Component of the mitochondrial ribosome small subunit. As to expression, expressed in root tips, lateral root primordia and leaf primordia. Highly detected in the mature pollen grains.

It localises to the mitochondrion matrix. It is found in the nucleus. RNA-binding protein that functions in both mitochondrion and nucleus. In mitochondrion, it is associated with polysomes and may play a role in translation. Required during embryogenesis. In nucleus, might be involved in the regulation of its own gene expression. The sequence is that of Small ribosomal subunit protein mL104 (rPPR9) (PNM1) from Arabidopsis thaliana (Mouse-ear cress).